Consider the following 217-residue polypeptide: Putative thymidylate synthase (217 aa).

Residue C139 is part of the active site.

It belongs to the thymidylate synthase family. Archaeal-type ThyA subfamily. In terms of assembly, monomer.

Its subcellular location is the cytoplasm. It participates in pyrimidine metabolism; dTTP biosynthesis. May catalyze the biosynthesis of dTMP using an unknown cosubstrate. The sequence is that of Putative thymidylate synthase from Methanosarcina barkeri (strain Fusaro / DSM 804).